Here is a 71-residue protein sequence, read N- to C-terminus: Beta-defensin 2 (71 aa).

Positions 1–20 (MRTLCSLLLICCLLFSYTTP) are cleaved as a signal peptide. Disulfide bonds link Cys37-Cys66, Cys44-Cys59, and Cys49-Cys67.

This sequence belongs to the beta-defensin family. As to expression, kidney, uterus and to a lesser extent in heart.

The protein resides in the secreted. Its function is as follows. Has bactericidal activity. This is Beta-defensin 2 (Defb2) from Mus musculus (Mouse).